The sequence spans 416 residues: Probable glucan 1,3-beta-glucosidase A (416 aa).

The signal sequence occupies residues 1-22; sequence MFVESAKKALLALSLLAASAQA. Asn-183 carries an N-linked (GlcNAc...) asparagine glycan. Residue Glu-210 is the Proton donor of the active site. 2 disulfides stabilise this stretch: Cys-290–Cys-415 and Cys-316–Cys-342. Catalysis depends on Glu-308, which acts as the Nucleophile.

The protein belongs to the glycosyl hydrolase 5 (cellulase A) family. As to quaternary structure, monomer. Requires Mn(2+) as cofactor.

It is found in the secreted. The catalysed reaction is Successive hydrolysis of beta-D-glucose units from the non-reducing ends of (1-&gt;3)-beta-D-glucans, releasing alpha-glucose.. Functionally, beta-glucanases participate in the metabolism of beta-glucan, the main structural component of the cell wall. It could also function biosynthetically as a transglycosylase. This Aspergillus niger (strain ATCC MYA-4892 / CBS 513.88 / FGSC A1513) protein is Probable glucan 1,3-beta-glucosidase A (exgA).